Reading from the N-terminus, the 237-residue chain is MASQDADALVTSSDPLHPANLIPELCRSFYQLGWVTGTGGGICIRTGDKVFIAPSGVQKERIESTHIFVLPYPQAAPSPHTDRAFLRRPAMNLKESACTPLFWNSFDLRNAGSCIHTHSQHAVMATLLWPGPVFTISHQEMIKGVRVGGTGAALSYLDTLELPIIENTPNEEDLKDSMAEAMLKYPDAAGVLVRRHGVYVWGNDWEKAKTQTECLDYLFEMGVRMKLAGLPTVLNEA.

C98 is a substrate binding site. Zn(2+)-binding residues include H116 and H118. E140 (proton donor/acceptor) is an active-site residue. A Zn(2+)-binding site is contributed by H196.

It belongs to the aldolase class II family. MtnB subfamily. The cofactor is Zn(2+).

The protein resides in the cytoplasm. It carries out the reaction 5-(methylsulfanyl)-D-ribulose 1-phosphate = 5-methylsulfanyl-2,3-dioxopentyl phosphate + H2O. Its pathway is amino-acid biosynthesis; L-methionine biosynthesis via salvage pathway; L-methionine from S-methyl-5-thio-alpha-D-ribose 1-phosphate: step 2/6. Catalyzes the dehydration of methylthioribulose-1-phosphate (MTRu-1-P) into 2,3-diketo-5-methylthiopentyl-1-phosphate (DK-MTP-1-P). This Laccaria bicolor (strain S238N-H82 / ATCC MYA-4686) (Bicoloured deceiver) protein is Methylthioribulose-1-phosphate dehydratase.